A 425-amino-acid polypeptide reads, in one-letter code: Pre-mRNA-splicing factor PRP46 (425 aa).

7 WD repeats span residues 111-151 (GHTG…LKVT), 154-193 (GHIM…VVRD), 196-235 (GTLS…CVLT), 238-279 (GHRG…KTLT), 281-320 (HKRN…TNFN), 322-360 (EALG…KFQK), and 371-410 (ESEK…TQDS).

This sequence belongs to the WD repeat PRL1/PRL2 family. In terms of assembly, associated with the spliceosome.

It is found in the cytoplasm. Its subcellular location is the nucleus. Its function is as follows. Involved in pre-mRNA splicing and required for cell cycle progression at G2/M. The protein is Pre-mRNA-splicing factor PRP46 (PRP46) of Eremothecium gossypii (strain ATCC 10895 / CBS 109.51 / FGSC 9923 / NRRL Y-1056) (Yeast).